A 154-amino-acid polypeptide reads, in one-letter code: MTQVIIDGDACPVTNSIIELTKGTGIFVTVVRSFSHFSTVIQPEHVNIIYVDDGPDAVDYRIVKLVHSDDLVVTQDYGLASLLLNKAKIVMHHKGFIYNQENINTLLEQRHASAQFRKSGGRTKGPAAFTEEDVSKFESIFSNLIHKYFLETED.

It belongs to the UPF0178 family.

The chain is UPF0178 protein SSP2038 from Staphylococcus saprophyticus subsp. saprophyticus (strain ATCC 15305 / DSM 20229 / NCIMB 8711 / NCTC 7292 / S-41).